The following is a 209-amino-acid chain: Probable GTP-binding protein EngB (209 aa).

Residues 22 to 198 (TPLEIAFVGR…NRTVGSWFDA (177 aa)) form the EngB-type G domain. Residues Ser37 and Thr59 each contribute to the Mg(2+) site.

It belongs to the TRAFAC class TrmE-Era-EngA-EngB-Septin-like GTPase superfamily. EngB GTPase family. The cofactor is Mg(2+).

Necessary for normal cell division and for the maintenance of normal septation. This Neisseria gonorrhoeae protein is Probable GTP-binding protein EngB.